Here is a 220-residue protein sequence, read N- to C-terminus: Endonuclease NucS (220 aa).

Belongs to the NucS endonuclease family.

Its subcellular location is the cytoplasm. Functionally, cleaves both 3' and 5' ssDNA extremities of branched DNA structures. This Mycobacterium leprae (strain TN) protein is Endonuclease NucS.